The primary structure comprises 602 residues: Elongation factor 4 (602 aa).

The 183-residue stretch at 7 to 189 folds into the tr-type G domain; it reads SKIRNFCIIA…AVVSRIPHPQ (183 aa). Residues 19-24 and 136-139 contribute to the GTP site; these read DHGKST and NKVD.

Belongs to the TRAFAC class translation factor GTPase superfamily. Classic translation factor GTPase family. LepA subfamily.

It is found in the cell inner membrane. It catalyses the reaction GTP + H2O = GDP + phosphate + H(+). Its function is as follows. Required for accurate and efficient protein synthesis under certain stress conditions. May act as a fidelity factor of the translation reaction, by catalyzing a one-codon backward translocation of tRNAs on improperly translocated ribosomes. Back-translocation proceeds from a post-translocation (POST) complex to a pre-translocation (PRE) complex, thus giving elongation factor G a second chance to translocate the tRNAs correctly. Binds to ribosomes in a GTP-dependent manner. The chain is Elongation factor 4 from Prochlorococcus marinus subsp. pastoris (strain CCMP1986 / NIES-2087 / MED4).